The primary structure comprises 545 residues: tRNA-2-methylthio-N(6)-dimethylallyladenosine synthase (545 aa).

The segment at 1–32 is disordered; it reads MSSASPLARCCDEATPSAGPRAAQPPYHGPVT. The region spanning 58 to 174 is the MTTase N-terminal domain; sequence RTYQVRTYGC…LPTLLERARH (117 aa). Residues Cys-67, Cys-103, Cys-137, Cys-211, Cys-215, and Cys-218 each coordinate [4Fe-4S] cluster. The Radical SAM core domain occupies 197-433; that stretch reads RESAYAAWVS…IALQEQISLE (237 aa). A TRAM domain is found at 436–504; the sequence is RALVGQAVEV…PHHLIADAGV (69 aa).

The protein belongs to the methylthiotransferase family. MiaB subfamily. Monomer. [4Fe-4S] cluster serves as cofactor.

It localises to the cytoplasm. The catalysed reaction is N(6)-dimethylallyladenosine(37) in tRNA + (sulfur carrier)-SH + AH2 + 2 S-adenosyl-L-methionine = 2-methylsulfanyl-N(6)-dimethylallyladenosine(37) in tRNA + (sulfur carrier)-H + 5'-deoxyadenosine + L-methionine + A + S-adenosyl-L-homocysteine + 2 H(+). Catalyzes the methylthiolation of N6-(dimethylallyl)adenosine (i(6)A), leading to the formation of 2-methylthio-N6-(dimethylallyl)adenosine (ms(2)i(6)A) at position 37 in tRNAs that read codons beginning with uridine. The chain is tRNA-2-methylthio-N(6)-dimethylallyladenosine synthase from Mycobacterium bovis (strain BCG / Pasteur 1173P2).